The following is a 180-amino-acid chain: UPF0340 protein BLi03936/BL03990 (180 aa).

It belongs to the UPF0340 family.

This is UPF0340 protein BLi03936/BL03990 from Bacillus licheniformis (strain ATCC 14580 / DSM 13 / JCM 2505 / CCUG 7422 / NBRC 12200 / NCIMB 9375 / NCTC 10341 / NRRL NRS-1264 / Gibson 46).